We begin with the raw amino-acid sequence, 5085 residues long: MNNIETYYPVTPLQQGLIFHSLLEPESGAYIVQMGLKLQGPLNIPLFEQAWQCLVDRHAIFRTRFVGGKVKEYVQVVLKDLKISLVEHDLIHLSSSEQEAFLHHFAKEDRKRGFDIEQAPLMRLNVFHLNSETVHFLWTLHHVLIDGWSMPLVFGEVFAAYEMLSKGQPLSLPPVRAYRDYIVWLKKQDLQQAEAFWRTYMQGFTEATPLSFGRAYKNPYLDQKQYRELDLTVSEQTSKALQTLARQHRLTVNTIVQGAWALLLNRYSGQDDIVFGATVSGRPADLPGVETMIGLFINTLPVRVQVNAEESVINWLKTLQQQQADFRQYEYTPLVEIQGWSDVPRGQSLFESILVFENMPVGKSGGGESAISIVDVYSEEQTNYPFTLVAASGKTIDIKVKFDESQFELAAIERVVDQLHSLLSSIAKNAKQRIGDLSLISESERQQVLVEWNQTAEDYPSGLCIHQAFEQQAEKTPDAVAVAYKNRELTYAQLNERANQLAHRLIRKGVKPDTLVGICLERSPEMIIGILGVMKAGAAYVPIDPAHPQERIAYMVADSQASALLTQQSLLEILPVTAAHVICLDSDLLADEPVDNASSEVTEQNLAYVIYTSGSTGLPKGVMIEHHSAINLAYALIDAFDIQPTSRVLQFTSFSFDVSVSEVVMALLAGATLVIEDRESLLPGPELIQVLQEQRITTVSMVSSVLAALPDADLPDLHTLIVGGEAPSRELVARYAPGRQFFNCYGPTEATVCSTMMLCQAGMNNPPIGRPIANATVYVLDANLNPVPVGVPGELYIGGKGLARGYWNRPELTAESFIPHPFGTAGERLYRTGDLVRYRQDGNLEFLGRIDHQVKIRGYRIELGEIENAIRQHPAVQEAVVIAREEKAGDKRLAAYLVAAGKAQPPAEEIALFLKETLPEYMVPAGVVWLDAIPLTVNGKVDRRALPVPDWGQLSTKREYVAPRTPTEEMVANIWSQVLSVERVGSFDDFFELGGHSLLATQTVSRLKEAFGVDLPLRVLFECSTVNKLSEWIAAAGEDKSGLSRIPLVPVSRDRHLPLSFAQQRLWFFDRLMPNSALYNIPTAVRLQGELDMDALEQSLQTIIQRHESLRTTFTDHNGEAVSVIHPEIDWKLERIDLRERSEEMRNEAGLRLAKEEANRPFDLVTGPLMRATIIQTDERDFIFLLNVHHIIADGWSAGILIRELFHCYQAFAKAEAPQLAELPIQYADYAYWQREWLTSDVLDEQLSYWRAKLGGAEPLLALPTDRPRPAVQSYAGSSISLLFDDELRANLLALSKREGTTLFMTLLAAFQVFLYRYTGQDDILVGTPEAGRSRQETEGLIGFFINTLVMRTDLSGEPSFKEVLARVRETALGAYAHQDLPFEKLVDELNVERSLSYSPLFQVMFVLQNIPVQADALDGIRILPLEGSQQVETTKFDLTLTMAEAANGLAATFEYNTALFERNTVERMIGHFSSLLKAVAANANQAITALPLMSEVEEQQLVLEWNDTAVAYSTEQLVHELVAQVARDMPDQPAVVTRDQLLTYGQLEAKANQLAHYLQKQGVGRGSLVGICVERSVEMVIGQLAIMKAGAAYIPMDPAYPKERLAFMMHDASMAIVLTQAKLRQKLPADTSRLICLDADWETIAQEPTAALVNTTAASDLAYVIYTSGSTGTPKGVEIEHAALLNLIFWHQRAYDVTATDRASQIAGTAFDASVWEIWPYVTKGATLYLPEEEIRLVPEKLRDWLVASNITVSFLPTPLTESMLALEWPGDTALRYMLTGGDKLHHYPSEKIPFTLVNQYGPTENTVVATAGIVPKEAGQTAAPTIGRPIDNVQVYILDAHRQPVPVGVSGELYIGGSSLARGYLNRPDLTQERFVAHPFTEKAGARLYRTGDLVRSLPDGSIEFIGRADDQTSIRGFRVELGEVETAIVALPAVKEAVVTVCTDKQGTKRLAAYLVLEEGAALATGDIRKALKETLPDYMVPAFFTQLAYLPLTPNGKVDRKNLPAPDFQRPELEGEFVSPSTEKERRLAAIWKDVLGIEQIGIHDNFFELGGDSILSIQIVSRANQAGLSLAPKQLFEYQTIAELAEIVEEKAAVQAEQGAVTGELPLLPIQKWFFRLPLANRDHWNQSVLLSIQAGIDPAALKQAVGQLMFQHDAFRMRYTQSESGWLQAMDAPSETIPFRVEDLSQLAPEEQSSAIEAIANETQTQLSLRAGQVVQTIYFHLGKEVPGRLLIVAHHLVVDGVSWRIILEDLQHAYQQIAAGQEVKLPAKTTSYKEWAQELERYAHSEAFKHEKSYWLSKSSVHSTELPADMPDSAENTEATVKSVHFSLTVEETKALLQQVPQAYRTQINDVLLAALAKALGQWTGKRSVFVNVEGHGREELAEHLDLSRTVGWFTSMYPVHLQWDETFSVRRALLTTKEELRAIPNKGLGYGVLRYLHAEQEIVDAISRIQADVLFNYMGKIDQIVGSDSLFGSAPESSGANLCPSAQRHHLLDVNSVVAGEQLHVTWRYSEKLQRESTIAAVAESFMAALREIVAHCTLPEAGGYSPSDFPLAVLEQKQIDKHIGFDRQIEDVYTLSPLQQGMLFHSLYNQDSGDYVVQFAVTFQNLDVSVLEKAWQNVLDRHSILRTHFVWEGLSEPHQVVRKDVKVTLTKEDWRHLQADVQDEMLAAFLEEDRRRSFDIAQAPLSRWVVFQTKDEEYRFVWSFHHVLLDGWSVPIVLNELLAHYAAISEGREGKLVPSQPFSQYIAWLKRQDREKAKPFWTDQLKGFHEPTSLGMGKNVAASQQKQYKEQSVLLSEEATEHLQSFTREHQLTLNTLVQGAWGWILGSYSGEEEVLFGATGSGRPADLPGVETMVGSFINTLPVRVPLQTDATLLAWLKDLQRRQLEIREYEYTPLFDIQGWSELPRGSALFESILVFENYPTVQAAKKGEDEAASATSGVSLEIHDVAAVEQTNYPLTLVAAPGKQVAFKLKYDQDRFDDAMIERVLNQMTRLMVYMSKSPELRLNDVALMDEDERKQVLIDWNRTEKEYPRELCLHHAFEQQAAKTPENIALEYKEQSLSYAGLNERANQLAHLLIAQGVKPDTTVAICVERSMEMIIGILGVLKAGAAYVPIDPAHPEERIAYMLDDSQAVVVLTQAGLADKFTQAAAPVICLGEKLFADRAHVDVDNIQTDVASTNLAYVIYTSGTTGLPKGVAVEHRSAMNMVQAYIAYFGLDESSRVLQFTSFSFDVSVSEIWQALLSGGTLVIEDRESLLPGPDLVRTLRERRISKVSMASSLLASLPVAEYPDLAVLEVGGDACSRELVARYATGRKFFNCYGPTEATVGTVIKQLTLDDDTPTIGRPFPNTKLYVLDQNRKPVPVGVPGELYIGGECLARGYWNRPELTAERFVANPFGQPGERLYRTGDLVRYLPDGNVDYLGRFDDQVKIRGYRIELGEIAEALRQHAAIREAVVLAREVRPGDKRLAAYLTSAAEQELSVDEIKQWLKEKLPDYMVPASYTWLPAIPLNVNGKVDRKALPAPDWGQITAAYVAPRNPLEEMIANVFAEVLAVEKVGIDDNFFELGGHSLLATQTVSRLREIVGVELQLRTLFEHPTVAGLGEQLELLTKQSSRKLAPPIGKVSRKEPLPLSFTQQRLWFLEQFTQNSSINNIPSFLRIQGELDVAAWEASFSAIILRHESLRTSFEVRDGRPVQVIQPHGDWAMTRIDLRALEPAEREAEIKRLAEQAIVQPFDLTKGLLLRASLVQLDANDFVFLFVMHHIASDGWSMGILLSELMTNYKAFRQGEASPLGELPIQYADFAVWQREWLSGEVLAEQLGYWREKLKGSEPLLQLPTDRPRPPVQTYEGEKMSVQFGAELLKQLQSLSRKEGATLFMTLFAAFQTLLYRYTNQDDILVGTPIAGRNKQETEQLIGYFINTLVLRTDMSGHPSFRELLARVRETALEAYAHQDVPFEKLLDELQLERSMSYSPLFQVMFILQNIPVQAEPAGDIQLSSFDLELGAVTSKFDMTVTMVETPDGLLATLEYNKALFDSSTITRMVEHFHKLMEEIVANPDQSITLLPLMREEEEQLLITEWNRTEVPYSREKCVHEMIEEMVSKAPDSIALIVGEQRVTYGELNRQANQLAHYLRKQGVGPEVLVGICAERTVEMMIGLLAILKAGGAYVPIDPAYPAERIAYIIGHSQIPVLLTQEHLLPTLPEHQAKVICLDRDWATVAVESEENPGKLATSDNLIYVIYTSGSTGNPKGVALEHRSVIYFLSWAHDTYTPEEMSGVLFSTSICFDLSVYEMFATLTMGGKVIMAENALQLPALPAADQVTLVNTVPSAATELVRMKGIPASVRVINLCGEPLSNRLAQELYAFPHVEKVFNLYGPTEDTVYSTHAIVTKGATNEPLIGRPQFNTHVFVLDSHRKPVPVGVPGELYLSGSGLARGYLHRPDLTAERFVQNPFREPGARMYRTGDLVRYLPDGNLQFVGRVDYQVKIRGYRIELGEIESVLNRFPGVKEVVLLAREDREGDKCLVAYIVFEADCTSKIHDLNHFLADKLPAYMIPQHYMILDSLPKTPNGKLDRKALPKPEYDRSEAGVEYVAPQTPVEIMLHAHWAAVLEMETIGVHDNFFEIGGHSLLATQLIFKVREELQLEVPLRILFETPTIAGMAKTIEEIIKHGLTSVSQEIDAKGLQDEVALDPAILAEQPYEGDPSQFQAALLTGATGFLGAFLLRDLLQMTDADIYCLVRASGEEEGLARLRKTLQLYELWDEAQAHRIIPVIGDLAQPRLGLSAGQFDALAATVDVIYHNGALVNFVYPYAALKKANVIGTEEIIRLAAAKKTKPVHFVSTIFTFASEEGEESVAVREEDMPENSRILTSGYTQSKWVAEHIVNLARQRGIPTAIYRCGRMTGDSETGACQKDDLMWRIAAGIIDLGKAPDMSGDLDMMPVDFASKGIVHLSMTEHSVNSNFHLLNPNATDYDDLIAAIENKGFELERVTMDEWIEAVQEDAKDKGMDANSAAPLGNLFSDGHSSRGSVVYVGNKTTRLLRQADIECPEIDEEVFAKVLDYFARTGQLRVTQNTRN.

Carrier domains lie at 962 to 1037 (APRT…AAAG), 2023 to 2097 (SPST…EEKA), 3544 to 3619 (APRN…ELLT), and 4601 to 4676 (APQT…EEII). O-(pantetheine 4'-phosphoryl)serine occurs at positions 997, 2058, 3579, and 4636.

Belongs to the ATP-dependent AMP-binding enzyme family. As to quaternary structure, large multienzyme complex composed of 4 subunits; LgrA, LgrB, LgrC and LgrD. Pantetheine 4'-phosphate serves as cofactor.

Functionally, activates the 13th to the 16th (Trp, D-Leu, Trp and Gly) amino acids in linear gramicidin and catalyzes the formation of the peptide bond between them. This enzyme is also responsible for the epimerization of the 14th (D-Leu) amino acid. It also catalyzes the NAD(P)H-dependent reduction of the C-terminal glycine residue of the N-formylated 16-mer peptide, that binds to the peptidyl carrier domain of the terminal module of this protein, to form a peptidyl-aldehyde intermediate that is released from the enzyme complex. In Brevibacillus parabrevis, this protein is Linear gramicidin synthase subunit D (lgrD).